The sequence spans 221 residues: MLFKNSKWIGSFSRRSRLKPDVDEILEKYSIQNSKESIEKIVNSQKRIWVEIGFGNGENMLYQVLNEPDLLFIGCEPYLKGVSRLLTNIEIQNIKNILMWTEDARELIANFPDNSVERFFILFPDPWPKRSHNKRRLINTEFLNLLAKKILITGEIFIATDHQDYAEWIASHIKQCNSLIYREDDFTSYTLTKYHRRALKDQRKVRFFKVSVINNLQTMDQ.

4 residues coordinate S-adenosyl-L-methionine: E51, E76, D103, and D125. The active site involves D125. Substrate-binding residues include K129 and D161.

This sequence belongs to the class I-like SAM-binding methyltransferase superfamily. TrmB family.

The enzyme catalyses guanosine(46) in tRNA + S-adenosyl-L-methionine = N(7)-methylguanosine(46) in tRNA + S-adenosyl-L-homocysteine. Its pathway is tRNA modification; N(7)-methylguanine-tRNA biosynthesis. Functionally, catalyzes the formation of N(7)-methylguanine at position 46 (m7G46) in tRNA. This Wolbachia pipientis wMel protein is tRNA (guanine-N(7)-)-methyltransferase.